The chain runs to 456 residues: Enolase (456 aa).

Gln-164 serves as a coordination point for (2R)-2-phosphoglycerate. The active-site Proton donor is the Glu-207. The Mg(2+) site is built by Asp-244, Glu-287, and Asp-314. (2R)-2-phosphoglycerate-binding residues include Lys-339, Arg-368, Ser-369, and Lys-390. Catalysis depends on Lys-339, which acts as the Proton acceptor.

The protein belongs to the enolase family. In terms of assembly, component of the RNA degradosome, a multiprotein complex involved in RNA processing and mRNA degradation. It depends on Mg(2+) as a cofactor.

The protein localises to the cytoplasm. It is found in the secreted. It localises to the cell surface. It carries out the reaction (2R)-2-phosphoglycerate = phosphoenolpyruvate + H2O. It participates in carbohydrate degradation; glycolysis; pyruvate from D-glyceraldehyde 3-phosphate: step 4/5. Catalyzes the reversible conversion of 2-phosphoglycerate (2-PG) into phosphoenolpyruvate (PEP). It is essential for the degradation of carbohydrates via glycolysis. This Francisella tularensis subsp. novicida (strain U112) protein is Enolase.